Consider the following 325-residue polypeptide: Beta-ketoacyl-[acyl-carrier-protein] synthase III (325 aa).

Catalysis depends on residues Cys116 and His252. The tract at residues 253–257 is ACP-binding; the sequence is QANLR. Asn282 is an active-site residue.

Belongs to the thiolase-like superfamily. FabH family. Homodimer.

The protein localises to the cytoplasm. The catalysed reaction is malonyl-[ACP] + acetyl-CoA + H(+) = 3-oxobutanoyl-[ACP] + CO2 + CoA. It participates in lipid metabolism; fatty acid biosynthesis. Its function is as follows. Catalyzes the condensation reaction of fatty acid synthesis by the addition to an acyl acceptor of two carbons from malonyl-ACP. Catalyzes the first condensation reaction which initiates fatty acid synthesis and may therefore play a role in governing the total rate of fatty acid production. Possesses both acetoacetyl-ACP synthase and acetyl transacylase activities. Its substrate specificity determines the biosynthesis of branched-chain and/or straight-chain of fatty acids. The sequence is that of Beta-ketoacyl-[acyl-carrier-protein] synthase III from Xanthomonas axonopodis pv. citri (strain 306).